The following is a 450-amino-acid chain: Exodeoxyribonuclease 7 large subunit (450 aa).

Belongs to the XseA family. As to quaternary structure, heterooligomer composed of large and small subunits.

It is found in the cytoplasm. It catalyses the reaction Exonucleolytic cleavage in either 5'- to 3'- or 3'- to 5'-direction to yield nucleoside 5'-phosphates.. Functionally, bidirectionally degrades single-stranded DNA into large acid-insoluble oligonucleotides, which are then degraded further into small acid-soluble oligonucleotides. The chain is Exodeoxyribonuclease 7 large subunit from Rickettsia felis (strain ATCC VR-1525 / URRWXCal2) (Rickettsia azadi).